A 506-amino-acid chain; its full sequence is Glutamate--tRNA ligase (506 aa).

The 'HIGH' region signature appears at 9 to 19 (PSPTGFQHIGG). The 'KMSKS' region motif lies at 251 to 255 (KLSKR). Residue K254 coordinates ATP.

This sequence belongs to the class-I aminoacyl-tRNA synthetase family. Glutamate--tRNA ligase type 1 subfamily. As to quaternary structure, monomer.

The protein localises to the cytoplasm. It catalyses the reaction tRNA(Glu) + L-glutamate + ATP = L-glutamyl-tRNA(Glu) + AMP + diphosphate. Catalyzes the attachment of glutamate to tRNA(Glu) in a two-step reaction: glutamate is first activated by ATP to form Glu-AMP and then transferred to the acceptor end of tRNA(Glu). The chain is Glutamate--tRNA ligase from Treponema denticola (strain ATCC 35405 / DSM 14222 / CIP 103919 / JCM 8153 / KCTC 15104).